The following is a 576-amino-acid chain: DNA mismatch repair protein MutL (576 aa).

It belongs to the DNA mismatch repair MutL/HexB family.

Its function is as follows. This protein is involved in the repair of mismatches in DNA. It is required for dam-dependent methyl-directed DNA mismatch repair. May act as a 'molecular matchmaker', a protein that promotes the formation of a stable complex between two or more DNA-binding proteins in an ATP-dependent manner without itself being part of a final effector complex. The protein is DNA mismatch repair protein MutL of Chlamydia trachomatis serovar A (strain ATCC VR-571B / DSM 19440 / HAR-13).